The chain runs to 501 residues: Aspartate--tRNA ligase, cytoplasmic (501 aa).

Thr-52 bears the Phosphothreonine mark. At Lys-74 the chain carries N6-acetyllysine. An L-aspartate-binding site is contributed by Glu-229. At Ser-249 the chain carries Phosphoserine. The aspartate stretch occupies residues 251–254; it reads QLYK. Arg-273 lines the L-aspartate pocket. ATP contacts are provided by residues 273 to 275 and 281 to 283; these read RAE and RHL. An N6-acetyllysine modification is found at Lys-374. Glu-424 contributes to the ATP binding site. The L-aspartate site is built by Ser-427 and Arg-431. ATP is bound at residue 472–475; that stretch reads GLER.

Belongs to the class-II aminoacyl-tRNA synthetase family. Type 2 subfamily. In terms of assembly, homodimer. Part of a multisubunit complex that groups tRNA ligases for Arg (RARS1), Asp (DARS1), Gln (QARS1), Ile (IARS1), Leu (LARS1), Lys (KARS1), Met (MARS1) the bifunctional ligase for Glu and Pro (EPRS1) and the auxiliary subunits AIMP1/p43, AIMP2/p38 and EEF1E1/p18.

The protein localises to the cytoplasm. It catalyses the reaction tRNA(Asp) + L-aspartate + ATP = L-aspartyl-tRNA(Asp) + AMP + diphosphate. In terms of biological role, catalyzes the specific attachment of an amino acid to its cognate tRNA in a 2 step reaction: the amino acid (AA) is first activated by ATP to form AA-AMP and then transferred to the acceptor end of the tRNA. This chain is Aspartate--tRNA ligase, cytoplasmic (Dars1), found in Rattus norvegicus (Rat).